The following is a 604-amino-acid chain: uncharacterized protein (604 aa).

An N-terminal signal peptide occupies residues 1–40 (MWLQQRIKVFPGLLSSSWARRVLAVSGFLVIIYWYIFSGS). Residues 41–563 (HYRSFWYSGK…EEHMAKQYRG (523 aa)) lie on the Extracellular side of the membrane. Asparagine 337 is a glycosylation site (N-linked (GlcNAc...) asparagine). Residues 564–584 (LPFLFWFSVASLITLFHLFLF) form a helical membrane-spanning segment. Residues 585 to 604 (KLIYNEYCGPGAKPLFRSKV) lie on the Cytoplasmic side of the membrane.

It localises to the membrane. This is an uncharacterized protein from Xenopus laevis (African clawed frog).